A 1905-amino-acid chain; its full sequence is Microtubule cross-linking factor 1 (1905 aa).

The tract at residues 1–249 is necessary for colocalization and binding with microtubules; that stretch reads METLNGPAGG…SSDREPPRGA (249 aa). Residues 1–329 form a disordered region; that stretch reads METLNGPAGG…SLGEQSRLVP (329 aa). Positions 1-508 are necessary for self-assembly, microtubule bundling activity and apicobasal microtubule organization; it reads METLNGPAGG…QDDSADLRCQ (508 aa). A compositionally biased stretch (basic residues) spans 22-40; the sequence is QHHRHHHLHPVAERRRLHR. 2 stretches are compositionally biased toward low complexity: residues 63 to 95 and 115 to 130; these read VPSS…AAPG and AGAR…LGSR. 2 positions are modified to phosphoserine: Ser77 and Ser87. Ser217, Ser221, and Ser263 each carry phosphoserine. Residues 268-283 are compositionally biased toward low complexity; that stretch reads ALLAAPLAAGACPGGR. 3 coiled-coil regions span residues 330–404, 432–483, and 513–718; these read AAEE…EQKS, SVRL…SSLK, and KEEA…LQHE. Disordered stretches follow at residues 544–563, 601–631, 671–694, 737–800, and 842–867; these read YGDV…PSTR, DMRG…LESS, FEPP…GAPL, LRAP…SEPC, and AGLR…GDQQ. Ser549 carries the post-translational modification Phosphoserine. A compositionally biased stretch (basic and acidic residues) spans 601 to 616; the sequence is DMRGQQEREGPGRDHA. Residue Ser618 is modified to Phosphoserine. Thr621 carries the phosphothreonine modification. The segment covering 680 to 692 has biased composition (gly residues); that stretch reads LGEGASPGAGGGA. Phosphoserine is present on Ser685. Residues 741-770 are compositionally biased toward basic and acidic residues; the sequence is SPRDSDAESDAGKKESDGEESRLPQPKREG. Ser776 carries the post-translational modification Phosphoserine. Residues 857-866 show a composition bias toward acidic residues; the sequence is GEEEQGEGDQ. Ser901, Ser923, Lys941, and Thr975 each carry phosphoserine. A disordered region spans residues 1080–1100; it reads GVQGGHQADGPDHDSDRGCGF. Coiled-coil stretches lie at residues 1143 to 1201 and 1238 to 1278; these read KALL…ELGS and EKNW…KENS. The necessary for interaction with MARK2 and apicobasal microtubule bundle formation in polarized epithelial cells stretch occupies residues 1265–1382; the sequence is EFLWRIEQLQ…EENHKGNLQR (118 aa). Ser1278 carries the post-translational modification Phosphoserine. Residues 1346–1384 form a disordered region; it reads ALSLDDEPEEPPAHRPEREFRNRLPEEEENHKGNLQRAV. A compositionally biased stretch (basic and acidic residues) spans 1356 to 1377; that stretch reads PPAHRPEREFRNRLPEEEENHK. Phosphoserine is present on residues Ser1385, Ser1388, and Ser1399. A Phosphothreonine modification is found at Thr1417. Phosphoserine is present on Ser1421. Tyr1427 carries the phosphotyrosine modification. Residues 1485–1505 are disordered; sequence DTMTSPEHCQKQPLRSHVLTE. Ser1514, Ser1523, Ser1561, Ser1578, Ser1583, Ser1592, and Ser1661 each carry phosphoserine. The disordered stretch occupies residues 1524–1569; that stretch reads ITAAGGEGPFPTSRARGSPGDTKGGPPEPMLSRWPCTSPRHSRDYV. 4 disordered regions span residues 1655 to 1689, 1707 to 1756, 1782 to 1842, and 1863 to 1905; these read GSGV…SRQV, PKYG…PVHT, GLRA…APPG, and KEER…PWGL. 2 positions are modified to phosphothreonine: Thr1667 and Thr1675. Residues 1678 to 1687 are compositionally biased toward low complexity; sequence SSPSRSLRSR. Residues 1678–1773 are necessary for colocalization and binding with microtubules; it reads SSPSRSLRSR…SLFNIIDHSP (96 aa). Residues Ser1679 and Ser1683 each carry the phosphoserine modification. Residues 1744-1756 show a composition bias toward polar residues; sequence ARSTTTRESPVHT. Phosphoserine is present on residues Ser1791, Ser1808, Ser1812, and Ser1814.

The protein belongs to the SOGA family. In terms of assembly, homodimer. Associates (via N- and C-terminus domains) with microtubule filaments. As to quaternary structure, interacts with MARK2; the interaction is direct. Post-translationally, phosphorylated during mitosis in a CDK1-dependent manner.

It localises to the lateral cell membrane. The protein resides in the apical cell membrane. The protein localises to the cytoplasm. It is found in the cytoskeleton. Its subcellular location is the spindle pole. It localises to the midbody. Its function is as follows. Microtubule-associated factor involved in the late phase of epithelial polarization and microtubule dynamics regulation. Plays a role in the development and maintenance of non-centrosomal microtubule bundles at the lateral membrane in polarized epithelial cells. Required for faithful chromosome segregation during mitosis. The chain is Microtubule cross-linking factor 1 (MTCL1) from Homo sapiens (Human).